The chain runs to 98 residues: Small ribosomal subunit protein uS19 (98 aa).

2 disordered regions span residues 1–30 (MARS…KKSV) and 78–98 (RTFH…PAKK). Basic and acidic residues predominate over residues 9–24 (PFADKHLTKKVEDANK).

This sequence belongs to the universal ribosomal protein uS19 family.

In terms of biological role, protein S19 forms a complex with S13 that binds strongly to the 16S ribosomal RNA. The sequence is that of Small ribosomal subunit protein uS19 from Anaeromyxobacter dehalogenans (strain 2CP-C).